The primary structure comprises 432 residues: Trigger factor (432 aa).

The region spanning 161 to 246 (EDRVTIDFTG…LKKVEERELP (86 aa)) is the PPIase FKBP-type domain.

It belongs to the FKBP-type PPIase family. Tig subfamily. Homodimer and monomer. In vivo most of the ribosomes are in complex with monomeric TF. Uncomplexed TF, however, is in a monomer-dimer equilibrium with approximately two thirds of TF existing in a dimeric state.

It localises to the cytoplasm. It catalyses the reaction [protein]-peptidylproline (omega=180) = [protein]-peptidylproline (omega=0). Functionally, involved in protein export. Acts as a chaperone by maintaining the newly synthesized protein in an open conformation. Functions as a peptidyl-prolyl cis-trans isomerase. The polypeptide is Trigger factor (Escherichia coli O139:H28 (strain E24377A / ETEC)).